Reading from the N-terminus, the 1420-residue chain is ABC transporter G family member 32 (1420 aa).

The ABC transporter 1 domain maps to 135-408; sequence LRNIHVIGGK…FSSLGFTCPD (274 aa). Position 168–175 (168–175) interacts with ATP; that stretch reads GPPSSGKT. An ABC transmembrane type-2 1 domain is found at 486–699; that stretch reads ELLKINFAWQ…AQNAASVNEF (214 aa). A run of 7 helical transmembrane segments spans residues 504-524, 544-564, 585-605, 623-643, 648-668, 674-694, and 735-755; these read FIYV…MTVF, LYFS…MLVA, LPSW…WVAV, FLLY…MGSL, IVAN…GGFI, IPSW…QNAA, and IGVA…TLFL. One can recognise an ABC transporter 2 domain in the interval 818–1070; that stretch reads LSFSNINYYV…ELIKYFESIE (253 aa). 863-870 is an ATP binding site; sequence GVSGAGKT. The ABC transmembrane type-2 2 domain occupies 1143-1357; sequence SQFVACLWKQ…TLYGLLVSQY (215 aa). 7 consecutive transmembrane segments (helical) span residues 1162 to 1182, 1202 to 1222, 1235 to 1255, 1277 to 1297, 1307 to 1327, 1334 to 1354, and 1392 to 1412; these read YTAV…TICW, YAAV…VVSI, MYSA…YVLA, FLWY…YGMM, VASI…GFMI, LWWR…GLLV, and VSAI…AFAI.

It belongs to the ABC transporter superfamily. ABCG family. PDR (TC 3.A.1.205) subfamily. Ubiquitous in aerial organs. Higher expression levels in young, expanding tissues than in older tissues. Detected in the epidermal layer.

It localises to the cell membrane. May be a general defense protein. Required for the formation of the cuticle layer of the cell wall. This chain is ABC transporter G family member 32, found in Arabidopsis thaliana (Mouse-ear cress).